A 161-amino-acid polypeptide reads, in one-letter code: PTS system glucose-specific EIIA component (161 aa).

The 105-residue stretch at 31 to 135 folds into the PTS EIIA type-1 domain; it reads DPVFSKKIVG…SILTPVVISN (105 aa). Zn(2+)-binding residues include histidine 68 and histidine 83. The Tele-phosphohistidine intermediate; for EIIA activity role is filled by histidine 83. A Phosphohistidine; by HPr modification is found at histidine 83.

Zn(2+) is required as a cofactor.

It localises to the cytoplasm. Functionally, the phosphoenolpyruvate-dependent sugar phosphotransferase system (sugar PTS), a major carbohydrate active transport system, catalyzes the phosphorylation of incoming sugar substrates concomitantly with their translocation across the cell membrane. The enzyme II complex composed of PtsG and Crr is involved in glucose transport. The protein is PTS system glucose-specific EIIA component (crr) of Buchnera aphidicola subsp. Acyrthosiphon pisum (strain APS) (Acyrthosiphon pisum symbiotic bacterium).